We begin with the raw amino-acid sequence, 167 residues long: Peptidoglycan L-alanyl-D-glutamate endopeptidase CwlK (167 aa).

Residues 1 to 26 form the signal peptide; sequence MNLPAKTFVILCILFLLDLCFSYIRH.

This sequence belongs to the peptidase M15C family.

It is found in the cell membrane. Functionally, cleaves the linkage of the L-alanine-D-glutamic acid of B.subtilis cell wall. The protein is Peptidoglycan L-alanyl-D-glutamate endopeptidase CwlK (cwlK) of Bacillus subtilis (strain 168).